The chain runs to 300 residues: Small ribosomal subunit biogenesis GTPase RsgA (300 aa).

The CP-type G domain occupies 69–231 (RSDEMRVKQF…LIDSPGFQAF (163 aa)). GTP-binding positions include 119 to 122 (NKID) and 172 to 180 (GQSGMGKST). The Zn(2+) site is built by cysteine 255, cysteine 260, histidine 262, and cysteine 268.

It belongs to the TRAFAC class YlqF/YawG GTPase family. RsgA subfamily. Monomer. Associates with 30S ribosomal subunit, binds 16S rRNA. It depends on Zn(2+) as a cofactor.

The protein localises to the cytoplasm. Functionally, one of several proteins that assist in the late maturation steps of the functional core of the 30S ribosomal subunit. Helps release RbfA from mature subunits. May play a role in the assembly of ribosomal proteins into the subunit. Circularly permuted GTPase that catalyzes slow GTP hydrolysis, GTPase activity is stimulated by the 30S ribosomal subunit. This is Small ribosomal subunit biogenesis GTPase RsgA from Bordetella bronchiseptica (strain ATCC BAA-588 / NCTC 13252 / RB50) (Alcaligenes bronchisepticus).